A 142-amino-acid polypeptide reads, in one-letter code: MTSRRTRARERALQALYQIDVAAEGIDDALSRFWKSFEPVEREVMDLAEGLVRGVAQHRRAVDEAIEAVSTNWRLDRMAKVDRNVLRLAVFELLRTDVPVKVVINEAIELGKKYGSESSGAFVNGVLDKVASGLPPARRGER.

It belongs to the NusB family.

In terms of biological role, involved in transcription antitermination. Required for transcription of ribosomal RNA (rRNA) genes. Binds specifically to the boxA antiterminator sequence of the ribosomal RNA (rrn) operons. In Anaeromyxobacter dehalogenans (strain 2CP-1 / ATCC BAA-258), this protein is Transcription antitermination protein NusB.